Reading from the N-terminus, the 809-residue chain is MKRAGTLRLLSDLSNFTGAARLRELLAGDPAILVRCSPDGRHLLLLRPPGSPAPQLLVAVRGPGLPLERAWSEGDPSPLDVFFVPWLARPALILVWESGLTEVWGVGMEPGWKLLQSTELCPDGGARVMAVAATRGRLVWCEERQPGVEDQPGQLSMAFNHCVCVKTLDTSGEAGTKLGCTHILLHHCPSFGLIASRKELFLVPTSTTWPGVAHVLLIWSPSKGKVIVAAPSLGLSHSKSLNPKQGDTWDFRTLLRGLPGFLSPREPLAVHTWAPSSQGLLLLDLKGKVSLVQCHGGTRTVGLLQEAPVGLQGSAALGTFHGTLACVLGSTLELLDMSSGRLLERKVLSTDRVHLLEPPAPGVKNEEDLETRGALRLLSALGLFCVCWEAPQGLEVPSDKDLVFEEACGYYQRRSLRGTQLTPEELRHNSMFRAPQALASILQGHLPPSALLTTLRAELRDYRSIEQLKAQLVAGDDEETGWTELAEHEVARLLRTHLTGDQLAQFNTIFQALPTAAWSATLQALQLQPDRSGRLRSQAPPDVWKKVLRAPTAGKEHPNGILPPFELLCQCLGQLEPQWLPPFVELAQQQGGPGWGAEGPSLPLYRRALSVLGEEGKRPEALELELLLGSGRPKAVLQAVRQLIKKEQWERALEAGLTLDSSSPLLRSEIFNLLLAEFAQHRRLDTHLPLLCRLCPPEVAPDELLLLLRTHLPDDAGATPFPEPGAEPGAEPPLTVGLVRALLEQTGAQGRSSGPVQSTFEDILWDSGTPPPTPPRGPMTTLQASDHPGQEAWGPSGQGLGAADVGVHS.

Over residues 747–760 (GAQGRSSGPVQSTF) the composition is skewed to polar residues. Positions 747–809 (GAQGRSSGPV…LGAADVGVHS (63 aa)) are disordered.

In terms of assembly, component of the biogenesis of lysosome-related organelles complex-2 (or BLOC2) composed of HPS3, HPS5 and HPS6. Interacts with HPS5 and HPS3. Interacts with biogenesis of lysosome-related organelles complex-1 (BLOC1). Interacts with AP-3 complex. Interacts with DCTN1 and dynein intermediate chain.

It is found in the microsome membrane. Its subcellular location is the cytoplasm. The protein localises to the cytosol. It localises to the early endosome membrane. The protein resides in the lysosome membrane. In terms of biological role, may regulate the synthesis and function of lysosomes and of highly specialized organelles, such as melanosomes and platelet dense granules. Acts as a cargo adapter for the dynein-dynactin motor complex to mediate the transport of lysosomes from the cell periphery to the perinuclear region. Facilitates retrograde lysosomal trafficking by linking the motor complex to lysosomes, and perinuclear positioning of lysosomes is crucial for the delivery of endocytic cargos to lysosomes, for lysosome maturation and functioning. This is BLOC-2 complex member HPS6 (Hps6) from Rattus norvegicus (Rat).